The chain runs to 269 residues: 3-methyl-2-oxobutanoate hydroxymethyltransferase (269 aa).

Mg(2+) is bound by residues Asp-46 and Asp-85. Residues 46-47 (DS), Asp-85, and Lys-114 each bind 3-methyl-2-oxobutanoate. Mg(2+) is bound at residue Glu-116. The active-site Proton acceptor is the Glu-183.

Belongs to the PanB family. In terms of assembly, homodecamer; pentamer of dimers. It depends on Mg(2+) as a cofactor.

It is found in the cytoplasm. It carries out the reaction 3-methyl-2-oxobutanoate + (6R)-5,10-methylene-5,6,7,8-tetrahydrofolate + H2O = 2-dehydropantoate + (6S)-5,6,7,8-tetrahydrofolate. It functions in the pathway cofactor biosynthesis; (R)-pantothenate biosynthesis; (R)-pantoate from 3-methyl-2-oxobutanoate: step 1/2. Its function is as follows. Catalyzes the reversible reaction in which hydroxymethyl group from 5,10-methylenetetrahydrofolate is transferred onto alpha-ketoisovalerate to form ketopantoate. This is 3-methyl-2-oxobutanoate hydroxymethyltransferase from Methylococcus capsulatus (strain ATCC 33009 / NCIMB 11132 / Bath).